The chain runs to 406 residues: Cysteine desulfurase (406 aa).

Lys226 is modified (N6-(pyridoxal phosphate)lysine). Residue Cys364 is the Cysteine persulfide intermediate of the active site.

It belongs to the class-V pyridoxal-phosphate-dependent aminotransferase family. Csd subfamily. Homodimer. Interacts with SufE and the SufBCD complex composed of SufB, SufC and SufD. The interaction with SufE is required to mediate the direct transfer of the sulfur atom from the S-sulfanylcysteine. Pyridoxal 5'-phosphate is required as a cofactor.

The protein resides in the cytoplasm. It catalyses the reaction (sulfur carrier)-H + L-cysteine = (sulfur carrier)-SH + L-alanine. The enzyme catalyses L-selenocysteine + AH2 = hydrogenselenide + L-alanine + A + H(+). It functions in the pathway cofactor biosynthesis; iron-sulfur cluster biosynthesis. In terms of biological role, cysteine desulfurases mobilize the sulfur from L-cysteine to yield L-alanine, an essential step in sulfur metabolism for biosynthesis of a variety of sulfur-containing biomolecules. Component of the suf operon, which is activated and required under specific conditions such as oxidative stress and iron limitation. Acts as a potent selenocysteine lyase in vitro, that mobilizes selenium from L-selenocysteine. Selenocysteine lyase activity is however unsure in vivo. The chain is Cysteine desulfurase from Yersinia pestis bv. Antiqua (strain Antiqua).